A 659-amino-acid polypeptide reads, in one-letter code: Polyamine transporter 4 (659 aa).

Composition is skewed to polar residues over residues 1 to 20 and 28 to 45; these read MPSS…NIQQ and NVTN…TGSI. Residues 1–81 form a disordered region; the sequence is MPSSLTKTES…LDWDGPDDPD (81 aa). Topologically, residues 1–99 are cytoplasmic; that stretch reads MPSSLTKTES…KKWYTTMTSA (99 aa). The helical transmembrane segment at 100–120 threads the bilayer; sequence FLCLVVTMGSSLYVSSVPELV. At 121–128 the chain is on the extracellular side; the sequence is ERYHVSQT. Residues 129–149 traverse the membrane as a helical segment; that stretch reads LALAGLTFYLLGLSTVIGAPL. At 150 to 157 the chain is on the cytoplasmic side; it reads SEVFGRKP. The chain crosses the membrane as a helical span at residues 158–178; sequence VYLFSLPVSMLFTMGVGLSNG. The Extracellular portion of the chain corresponds to 179 to 187; the sequence is HMRIILPLR. The helical transmembrane segment at 188-208 threads the bilayer; the sequence is FLSGVFASPALSVGSGTILDI. At 209-215 the chain is on the cytoplasmic side; it reads FDVDQVS. Residues 216-236 traverse the membrane as a helical segment; that stretch reads VAMTYFVLSPFLGPVLSPIMA. The Extracellular segment spans residues 237–246; sequence GFATEAKGWR. Residues 247–267 traverse the membrane as a helical segment; sequence WSEWIQLIAGGLILPFIALMP. Topologically, residues 268 to 316 are cytoplasmic; the sequence is ETHKGIILRKRAKKRNIALKKFSREAQKEFLKTTVTITILRPLKMLVVE. Residues 317 to 337 form a helical membrane-spanning segment; the sequence is PIVFVFSVYVAFIFAILFGFF. At 338-355 the chain is on the extracellular side; the sequence is EAYAVIYRGVYHMSMGIS. Residues 356–376 form a helical membrane-spanning segment; it reads GLPFIGIGVGLWIGAFFYLYI. The Cytoplasmic portion of the chain corresponds to 377-423; that stretch reads DRKYLFPKPPAGTQPLTEKERTSKRTTPYRGARDAETGELLPVVPEK. The tract at residues 387–408 is disordered; the sequence is AGTQPLTEKERTSKRTTPYRGA. The chain crosses the membrane as a helical span at residues 424–444; the sequence is FLIACKFGSVALPIGLFWQAW. Residues 445-456 lie on the Extracellular side of the membrane; sequence TARSDVHWMAPV. The chain crosses the membrane as a helical span at residues 457 to 477; the sequence is AAGVPFGFGLILIFFSVLMYF. Residues 478–486 lie on the Cytoplasmic side of the membrane; the sequence is STCYPPLTV. The chain crosses the membrane as a helical span at residues 487–509; it reads ASCLAANNLLRYVMSSVFPLFTI. Over 510-518 the chain is Extracellular; that stretch reads QMYTKMKIK. Residues 519–539 traverse the membrane as a helical segment; sequence WASTLFALVCVVMIPIPWVFE. Residues 540-659 lie on the Cytoplasmic side of the membrane; that stretch reads KWGSKLRHKS…MATDASARMV (120 aa). A compositionally biased stretch (basic and acidic residues) spans 587-602; sequence METDPSTREKPGERLS. Residues 587–631 form a disordered region; that stretch reads METDPSTREKPGERLSLRRTHTQPVPASFDREDGQHAQNRNEPIS. Phosphothreonine occurs at positions 589, 606, and 608. Residues 622-631 show a composition bias toward polar residues; sequence HAQNRNEPIS. Ser-633 and Ser-646 each carry phosphoserine.

This sequence belongs to the major facilitator superfamily. DHA1 family. Polyamines/proton antiporter (TC 2.A.1.2.16) subfamily.

The protein localises to the cell membrane. Its function is as follows. Cell membrane polyamine/proton antiporter, involved in the detoxification of excess polyamines in the cytoplasm. Recognizes spermidine, spermine and the antimalarial drug quinidine, but not quinine, chloroquine and mefloquine. The polypeptide is Polyamine transporter 4 (TPO4) (Saccharomyces cerevisiae (strain ATCC 204508 / S288c) (Baker's yeast)).